The following is a 189-amino-acid chain: Protein F29A7.6 (189 aa).

Positions 124-161 (KSLGGQKLAALDKKSQSKRERRQQNERNEETTGGRRFN) are disordered. The segment covering 133–161 (ALDKKSQSKRERRQQNERNEETTGGRRFN) has biased composition (basic and acidic residues).

It belongs to the MPP6 family.

This chain is Protein F29A7.6, found in Caenorhabditis elegans.